The primary structure comprises 365 residues: Succinyl-diaminopimelate desuccinylase (365 aa).

His65 provides a ligand contact to Zn(2+). Asp67 is a catalytic residue. Asp96 lines the Zn(2+) pocket. Residue Glu126 is the Proton acceptor of the active site. Positions 127, 155, and 340 each coordinate Zn(2+).

This sequence belongs to the peptidase M20A family. DapE subfamily. Homodimer. The cofactor is Zn(2+). Co(2+) is required as a cofactor.

It catalyses the reaction N-succinyl-(2S,6S)-2,6-diaminopimelate + H2O = (2S,6S)-2,6-diaminopimelate + succinate. Its pathway is amino-acid biosynthesis; L-lysine biosynthesis via DAP pathway; LL-2,6-diaminopimelate from (S)-tetrahydrodipicolinate (succinylase route): step 3/3. Catalyzes the hydrolysis of N-succinyl-L,L-diaminopimelic acid (SDAP), forming succinate and LL-2,6-diaminopimelate (DAP), an intermediate involved in the bacterial biosynthesis of lysine and meso-diaminopimelic acid, an essential component of bacterial cell walls. This chain is Succinyl-diaminopimelate desuccinylase, found in Campylobacter jejuni subsp. jejuni serotype O:6 (strain 81116 / NCTC 11828).